The sequence spans 452 residues: MASTTSVRQFSTSGSVKGLCAPGMGFSRMSSVRVGGACRAPSLLGGGSCGNMSVTSSRFSAGLGGGYGGGYTCSLGGGFGSSFGVSDALLGGSEKETMQNLNDRLATYLDRVRALEEANADLEVKIREWYKKQGPGPARDYSPYFKTIEDLRNKILAATIDNASIVLQIDNARLAADDFRTKYETELNLRMSVEADINGLRRVLDELTLARADLEMQIESLKEELAYLRKNHEEEMNALRGQVGGDVNVEMDAAPGVDLSRILNEMRDQYEKMAEKNRKDAEEWFFTKTEELNREVATNTEALQSSRTEITELRRSVQNLEIELQSQLSMKASLENSLAETEARYGAQLAQLQGLISSVEQQLCELRCDMERQNHEYQVLLDVKTRLEQEIATYRRLLEGEDAHLATQYSSSLASQPSREGMVTSRQVRTIVEEVQDGKVVSSREQVHRSTH.

Residues 4–93 (TTSVRQFSTS…GVSDALLGGS (90 aa)) form a head region. A coil 1A region spans residues 94-129 (EKETMQNLNDRLATYLDRVRALEEANADLEVKIREW). The IF rod domain maps to 94 to 405 (EKETMQNLND…RLLEGEDAHL (312 aa)). Residues 130-147 (YKKQGPGPARDYSPYFKT) are linker 1. The tract at residues 148-239 (IEDLRNKILA…KNHEEEMNAL (92 aa)) is coil 1B. A linker 12 region spans residues 240-262 (RGQVGGDVNVEMDAAPGVDLSRI). Residues 263–401 (LNEMRDQYEK…ATYRRLLEGE (139 aa)) are coil 2. Positions 402 to 452 (DAHLATQYSSSLASQPSREGMVTSRQVRTIVEEVQDGKVVSSREQVHRSTH) are tail.

This sequence belongs to the intermediate filament family. As to quaternary structure, heterodimer of a type I and a type II keratin. Colocalizes with KRT8/KRT18 filament network. Expressed in nail matrix and nail bed epithelium (at protein level). Also expressed in tongue and digits with weak expression in vibrissae and in both filiform and fungiform papillae of oral mucosa.

The protein resides in the cytoplasm. The chain is Keratin, type I cytoskeletal 42 from Mus musculus (Mouse).